We begin with the raw amino-acid sequence, 88 residues long: LYR motif-containing protein 2 (88 aa).

The N-terminal 19 residues, 1-19, are a transit peptide targeting the mitochondrion; that stretch reads MAASRLPPATLTLKQFMRR.

Belongs to the complex I LYR family.

The protein localises to the mitochondrion. Its function is as follows. Involved in efficient integration of the N-module into mitochondrial respiratory chain complex I. In Rattus norvegicus (Rat), this protein is LYR motif-containing protein 2 (Lyrm2).